We begin with the raw amino-acid sequence, 1479 residues long: DNA-directed RNA polymerase subunit beta'' (1479 aa).

4 residues coordinate Zn(2+): C220, C296, C303, and C306. Disordered stretches follow at residues 618-640 (TRAE…REDE) and 663-756 (LEDE…KKEG). 3 stretches are compositionally biased toward acidic residues: residues 622 to 631 (DSEEEYETLE), 704 to 717 (DEYG…EDEY), and 731 to 749 (LEED…PEED).

This sequence belongs to the RNA polymerase beta' chain family. RpoC2 subfamily. In terms of assembly, in plastids the minimal PEP RNA polymerase catalytic core is composed of four subunits: alpha, beta, beta', and beta''. When a (nuclear-encoded) sigma factor is associated with the core the holoenzyme is formed, which can initiate transcription. It depends on Zn(2+) as a cofactor.

It is found in the plastid. Its subcellular location is the chloroplast. The catalysed reaction is RNA(n) + a ribonucleoside 5'-triphosphate = RNA(n+1) + diphosphate. Functionally, DNA-dependent RNA polymerase catalyzes the transcription of DNA into RNA using the four ribonucleoside triphosphates as substrates. This is DNA-directed RNA polymerase subunit beta'' from Triticum aestivum (Wheat).